The sequence spans 581 residues: mRNA-decapping enzyme 1B (581 aa).

Residue Ser-145 is modified to Phosphoserine. 2 disordered regions span residues 181–222 (QISS…PEPQ) and 236–258 (APCQ…PEKF). Positions 204-219 (GSRQQRGPRPGQTSDP) are enriched in polar residues. Residues 244–255 (PPQTLPLQQQQP) show a composition bias toward low complexity. Ser-269 and Ser-326 each carry phosphoserine. The interval 349–411 (AENRCEPGAP…HQPVTGPGEV (63 aa)) is disordered. Over residues 355 to 367 (PGAPAPASSATTP) the composition is skewed to low complexity. Position 366 is a phosphothreonine (Thr-366). Residues 368 to 381 (VSLAQPTRLSSALP) are compositionally biased toward polar residues. Over residues 382 to 401 (PQTPGPRALPRPAPPGPGPG) the composition is skewed to pro residues. Ser-412 carries the post-translational modification Phosphoserine. The interval 427–468 (QQLPAPGRPALAAKFPTATLSTRARNPLEPWRDPPPSTEQPA) is disordered. Ser-475 carries the post-translational modification Phosphoserine. A disordered region spans residues 498–522 (SWAPPQERSRAPLPPGNQDPAATPT).

This sequence belongs to the DCP1 family. In terms of assembly, interacts with DCP1A.

Its subcellular location is the cytoplasm. The protein resides in the nucleus. The enzyme catalyses a 5'-end (N(7)-methyl 5'-triphosphoguanosine)-ribonucleoside in mRNA + H2O = N(7)-methyl-GDP + a 5'-end phospho-ribonucleoside in mRNA + 2 H(+). Its function is as follows. May play a role in the degradation of mRNAs, both in normal mRNA turnover and in nonsense-mediated mRNA decay. May remove the 7-methyl guanine cap structure from mRNA molecules, yielding a 5'-phosphorylated mRNA fragment and 7m-GDP. The protein is mRNA-decapping enzyme 1B (DCP1B) of Bos taurus (Bovine).